A 324-amino-acid polypeptide reads, in one-letter code: Elongation factor P--(R)-beta-lysine ligase (324 aa).

A substrate-binding site is contributed by 75 to 77; the sequence is SPE. ATP-binding positions include 99–101 and asparagine 108; that span reads RNQ. Position 117 (tyrosine 117) interacts with substrate. 243–244 provides a ligand contact to ATP; it reads EL. Residue glutamate 250 participates in substrate binding. ATP is bound at residue glycine 299.

Belongs to the class-II aminoacyl-tRNA synthetase family. EpmA subfamily. In terms of assembly, homodimer.

It carries out the reaction D-beta-lysine + L-lysyl-[protein] + ATP = N(6)-((3R)-3,6-diaminohexanoyl)-L-lysyl-[protein] + AMP + diphosphate + H(+). Its function is as follows. With EpmB is involved in the beta-lysylation step of the post-translational modification of translation elongation factor P (EF-P). Catalyzes the ATP-dependent activation of (R)-beta-lysine produced by EpmB, forming a lysyl-adenylate, from which the beta-lysyl moiety is then transferred to the epsilon-amino group of a conserved specific lysine residue in EF-P. This Buchnera aphidicola subsp. Schizaphis graminum (strain Sg) protein is Elongation factor P--(R)-beta-lysine ligase.